The primary structure comprises 319 residues: N-acyl-aromatic-L-amino acid amidohydrolase (carboxylate-forming) (319 aa).

Residues 1–210 are hydrolytic domain; that stretch reads MCSLPVPREP…TVLDFIELFN (210 aa). Zn(2+) contacts are provided by His21 and Glu24. Substrate-binding positions include Arg63 and 70–71; that span reads NR. Residue His116 participates in Zn(2+) binding. Glu178 and Tyr288 together coordinate substrate. The segment at 211-318 is shielding domain; the sequence is QGTAFPAFEM…PALTPAPSPA (108 aa).

This sequence belongs to the AspA/AstE family. Aspartoacylase subfamily. Exists as a mixture of homodimers and homotetramer, both catalytically active. As to quaternary structure, (Microbial infection) Interacts with hepatitis C virus/HCV core protein. Zn(2+) serves as cofactor.

It is found in the apical cell membrane. Its subcellular location is the cytoplasm. It carries out the reaction an N-acyl-aromatic L-alpha-amino acid + H2O = an aromatic L-alpha-amino acid + a carboxylate. The catalysed reaction is an N-acetyl-L-cysteine-S-conjugate + H2O = an S-substituted L-cysteine + acetate. Plays an important role in deacetylating mercapturic acids in kidney proximal tubules. Also acts on N-acetyl-aromatic amino acids. The protein is N-acyl-aromatic-L-amino acid amidohydrolase (carboxylate-forming) (ACY3) of Homo sapiens (Human).